The primary structure comprises 110 residues: Cyclin-dependent protein kinase inhibitor SMR8 (110 aa).

In terms of assembly, interacts with CDKA-1 and D-type cyclins. As to expression, expressed in the root vascular tissue.

In terms of biological role, probable cyclin-dependent protein kinase (CDK) inhibitor that functions as a repressor of mitosis in the endoreduplication cell cycle. The protein is Cyclin-dependent protein kinase inhibitor SMR8 of Arabidopsis thaliana (Mouse-ear cress).